The following is a 212-amino-acid chain: Telomere repeats-binding bouquet formation protein 2 (212 aa).

This sequence belongs to the TERB2 family. As to quaternary structure, component of the MAJIN-TERB1-TERB2 complex.

In terms of biological role, meiosis-specific telomere-associated protein involved in meiotic telomere attachment to the nucleus inner membrane, a crucial step for homologous pairing and synapsis. Component of the MAJIN-TERB1-TERB2 complex, which promotes telomere cap exchange by mediating attachment of telomeric DNA to the inner nuclear membrane and replacement of the protective cap of telomeric chromosomes: in early meiosis, the MAJIN-TERB1-TERB2 complex associates with telomeric DNA and the shelterin/telosome complex. During prophase, the complex matures and promotes release of the shelterin/telosome complex from telomeric DNA. In Danio rerio (Zebrafish), this protein is Telomere repeats-binding bouquet formation protein 2.